We begin with the raw amino-acid sequence, 668 residues long: DNA ligase (668 aa).

NAD(+) contacts are provided by residues 37–41 (DAVYD), 86–87 (SM), and Glu116. Lys118 acts as the N6-AMP-lysine intermediate in catalysis. NAD(+) is bound by residues Arg139, Glu173, Lys288, and Lys312. Cys406, Cys409, Cys424, and Cys429 together coordinate Zn(2+). Residues 590–668 (APDNFFKEKT…EQEAIAKIEK (79 aa)) form the BRCT domain.

The protein belongs to the NAD-dependent DNA ligase family. LigA subfamily. Mg(2+) serves as cofactor. It depends on Mn(2+) as a cofactor.

It catalyses the reaction NAD(+) + (deoxyribonucleotide)n-3'-hydroxyl + 5'-phospho-(deoxyribonucleotide)m = (deoxyribonucleotide)n+m + AMP + beta-nicotinamide D-nucleotide.. Functionally, DNA ligase that catalyzes the formation of phosphodiester linkages between 5'-phosphoryl and 3'-hydroxyl groups in double-stranded DNA using NAD as a coenzyme and as the energy source for the reaction. It is essential for DNA replication and repair of damaged DNA. The chain is DNA ligase from Lactobacillus gasseri (strain ATCC 33323 / DSM 20243 / BCRC 14619 / CIP 102991 / JCM 1131 / KCTC 3163 / NCIMB 11718 / NCTC 13722 / AM63).